The sequence spans 427 residues: MLDTVAPGPDIDVLMNDIGRKAKAAARPLGFASTEAKNSALNAMADAILANKAHILAENAKDLKDIEGTEMLASFVDRLTLNDKRVAEMAEGIRAIAALADPVGEVIAAWDRPNGLKIERVRTPLGVIGVIFESRPNVTADAGALCLKAGNAVILRCGSDSRRSSQAIHACLVKGLKAAGLPEHAIQLVPVTDRAAVGAMLRGLDGAIDVIVPRGGKSLVARVQSEARVPVFAHLEGLCHIYVDASADIEMAKKIIVNAKMRRTGICGAVETLLVDGAAIGTHLTPLLEALTDAGCEIRASPTVLKVAPGMKPATEEDWSTEYLDAIISVAVVDGISGAIAHIQTYSSNHTEAVIAEDPDVVARFFTEVDSAILLHNASTQFADGGEFGMGAEIGIATGKMHARGPVGVEQLTSFKYRVHGAGQTRP.

Belongs to the gamma-glutamyl phosphate reductase family.

It localises to the cytoplasm. It carries out the reaction L-glutamate 5-semialdehyde + phosphate + NADP(+) = L-glutamyl 5-phosphate + NADPH + H(+). It functions in the pathway amino-acid biosynthesis; L-proline biosynthesis; L-glutamate 5-semialdehyde from L-glutamate: step 2/2. Functionally, catalyzes the NADPH-dependent reduction of L-glutamate 5-phosphate into L-glutamate 5-semialdehyde and phosphate. The product spontaneously undergoes cyclization to form 1-pyrroline-5-carboxylate. The chain is Gamma-glutamyl phosphate reductase from Rhizobium johnstonii (strain DSM 114642 / LMG 32736 / 3841) (Rhizobium leguminosarum bv. viciae).